Consider the following 543-residue polypeptide: Phosphoenolpyruvate carboxykinase (ATP) (543 aa).

Residue 244-251 participates in ATP binding; it reads GLSGTGKT.

This sequence belongs to the phosphoenolpyruvate carboxykinase (ATP) family.

The enzyme catalyses oxaloacetate + ATP = phosphoenolpyruvate + ADP + CO2. It functions in the pathway carbohydrate biosynthesis; gluconeogenesis. In Kluyveromyces lactis (strain ATCC 8585 / CBS 2359 / DSM 70799 / NBRC 1267 / NRRL Y-1140 / WM37) (Yeast), this protein is Phosphoenolpyruvate carboxykinase (ATP) (PCK1).